Consider the following 308-residue polypeptide: Putative T-box protein 30/42 (308 aa).

Positions 11 to 192 (MSNEELWKER…KHSTFGNRSE (182 aa)) form a DNA-binding region, T-box. The disordered stretch occupies residues 186–220 (TFGNRSEGGIKRKTSDAAGQLPSKRSSKKPVKKDV).

The protein localises to the nucleus. Its function is as follows. Involved in the regulatory network to control embryonic patterning and morphogenesis. Implicated in negatively regulating vab-7 expression at the anterior of embryos. The sequence is that of Putative T-box protein 30/42 (tbx-30) from Caenorhabditis elegans.